Reading from the N-terminus, the 607-residue chain is ATP-dependent RNA helicase dbp9 (607 aa).

Positions 24–52 match the Q motif motif; it reads VTFASLGLDARLLQGIAKQNFQSPTLVQS. Residues 55-232 enclose the Helicase ATP-binding domain; sequence IPLTLEGRDI…GLFCRNPEVL (178 aa). Position 68-75 (68-75) interacts with ATP; that stretch reads AKTGSGKT. Positions 180–183 match the DEAD box motif; that stretch reads DEAD. The region spanning 243-475 is the Helicase C-terminal domain; that stretch reads GVSQFVVKCA…EVKPYNFDMK (233 aa). The segment covering 332-343 has biased composition (basic and acidic residues); it reads VLGDEDEPKSGD. 2 disordered regions span residues 332-380 and 573-607; these read VLGD…GKKD and TENRIRKARAANKAKGRGKGRKSDPLKTFKAKSKK. Residues 344–356 show a composition bias toward acidic residues; sequence AEEVEADDADEEK. Over residues 357–368 the composition is skewed to basic and acidic residues; that stretch reads EDAKDAKKETKQ. Residues 578–592 are compositionally biased toward basic residues; sequence RKARAANKAKGRGKG.

Belongs to the DEAD box helicase family. DDX56/DBP9 subfamily.

Its subcellular location is the nucleus. It localises to the nucleolus. It carries out the reaction ATP + H2O = ADP + phosphate + H(+). Functionally, ATP-binding RNA helicase involved in the biogenesis of 60S ribosomal subunits and is required for the normal formation of 25S and 5.8S rRNAs. The sequence is that of ATP-dependent RNA helicase dbp9 (dbp9) from Botryotinia fuckeliana (strain B05.10) (Noble rot fungus).